Reading from the N-terminus, the 89-residue chain is Mitochondrial import inner membrane translocase subunit Tim9 (89 aa).

Residue Ala-2 is modified to N-acetylalanine. Residues 28 to 52 carry the Twin CX3C motif motif; sequence CFLDCVKDFTTREVKPEEVTCSEHC. 2 cysteine pairs are disulfide-bonded: Cys-28–Cys-52 and Cys-32–Cys-48.

It belongs to the small Tim family. In terms of assembly, heterohexamer; composed of 3 copies of TIMM9 and 3 copies of TIMM10/TIM10A, named soluble 70 kDa complex. The complex forms a 6-bladed alpha-propeller structure and associates with the TIMM22 component of the TIM22 complex. Interacts with multi-pass transmembrane proteins in transit. Also forms a complex composed of TIMM9, TIMM10/TIM10A and FXC1/TIM10B.

Its subcellular location is the mitochondrion inner membrane. Its function is as follows. Mitochondrial intermembrane chaperone that participates in the import and insertion of multi-pass transmembrane proteins into the mitochondrial inner membrane. May also be required for the transfer of beta-barrel precursors from the TOM complex to the sorting and assembly machinery (SAM complex) of the outer membrane. Acts as a chaperone-like protein that protects the hydrophobic precursors from aggregation and guide them through the mitochondrial intermembrane space. This chain is Mitochondrial import inner membrane translocase subunit Tim9 (Timm9), found in Mus musculus (Mouse).